Here is a 913-residue protein sequence, read N- to C-terminus: Transient receptor potential cation channel protein painless (913 aa).

Residues methionine 1–arginine 490 lie on the Cytoplasmic side of the membrane. 3 ANK repeats span residues glycine 154 to serine 189, glutamate 260 to serine 289, and glycine 368 to serine 397. A helical membrane pass occupies residues leucine 491–threonine 511. Over tyrosine 512–arginine 523 the chain is Extracellular. The chain crosses the membrane as a helical span at residues alanine 524 to glutamate 544. Residues cysteine 545–tyrosine 555 lie on the Cytoplasmic side of the membrane. The helical transmembrane segment at phenylalanine 556–methionine 576 threads the bilayer. The Extracellular portion of the chain corresponds to glutamate 577 to arginine 586. Residues valine 587–leucine 607 form a helical membrane-spanning segment. Over proline 608–lysine 628 the chain is Cytoplasmic. Residues serine 629–glycine 649 form a helical membrane-spanning segment. Residues lysine 650–serine 708 are Extracellular-facing. Residues glutamine 656–glutamate 675 form a disordered region. Residues isoleucine 709–leucine 729 form a helical membrane-spanning segment. Residues leucine 730–lysine 913 are Cytoplasmic-facing.

The protein belongs to the transient receptor (TC 1.A.4) family. Present in multidendritic neurons, chordotonal neurons, a subset of cells in the central nervous system and a subset of sensory neurons in the antennal-maxillary complex. Not detected in gonads and dorsal vessels (at protein level). Expressed in peripheral neurons that extend multiple branched dendrites beneath the larval epidermis, similar to vertebrate pain receptors.

Its subcellular location is the membrane. Functionally, receptor-activated non-selective cation channel involved in detection of pain sensation due to high temperature. Involved in heat nociception by being activated by noxious temperature of 38 degrees Celsius. The chain is Transient receptor potential cation channel protein painless (pain) from Drosophila melanogaster (Fruit fly).